We begin with the raw amino-acid sequence, 180 residues long: NADH-quinone oxidoreductase subunit I (180 aa).

4Fe-4S ferredoxin-type domains are found at residues 50-80 and 90-119; these read LTRD…LQKA and EFFR…LTPD. The [4Fe-4S] cluster site is built by Cys60, Cys63, Cys66, Cys70, Cys99, Cys102, Cys105, and Cys109.

Belongs to the complex I 23 kDa subunit family. NDH-1 is composed of 13 different subunits. Subunits NuoA, H, J, K, L, M, N constitute the membrane sector of the complex. [4Fe-4S] cluster is required as a cofactor.

It is found in the cell inner membrane. The catalysed reaction is a quinone + NADH + 5 H(+)(in) = a quinol + NAD(+) + 4 H(+)(out). In terms of biological role, NDH-1 shuttles electrons from NADH, via FMN and iron-sulfur (Fe-S) centers, to quinones in the respiratory chain. The immediate electron acceptor for the enzyme in this species is believed to be ubiquinone. Couples the redox reaction to proton translocation (for every two electrons transferred, four hydrogen ions are translocated across the cytoplasmic membrane), and thus conserves the redox energy in a proton gradient. The protein is NADH-quinone oxidoreductase subunit I of Salmonella choleraesuis (strain SC-B67).